Here is a 377-residue protein sequence, read N- to C-terminus: uncharacterized protein (377 aa).

The next 4 membrane-spanning stretches (helical) occupy residues T26–I46, T67–I87, F108–T128, and I135–I155.

It localises to the cell membrane. This is an uncharacterized protein from Methanocaldococcus jannaschii (strain ATCC 43067 / DSM 2661 / JAL-1 / JCM 10045 / NBRC 100440) (Methanococcus jannaschii).